The following is a 173-amino-acid chain: Urease accessory protein UreE (173 aa).

The segment at 136–173 (PEGGAYAGSGQDHHDHSHGEHTQGEHTHDEAAEPHHHG) is disordered. Positions 146–173 (QDHHDHSHGEHTQGEHTHDEAAEPHHHG) are enriched in basic and acidic residues.

The protein belongs to the UreE family.

Its subcellular location is the cytoplasm. Its function is as follows. Involved in urease metallocenter assembly. Binds nickel. Probably functions as a nickel donor during metallocenter assembly. This chain is Urease accessory protein UreE, found in Beijerinckia indica subsp. indica (strain ATCC 9039 / DSM 1715 / NCIMB 8712).